A 1143-amino-acid chain; its full sequence is DNA-directed RNA polymerase subunit beta (1143 aa).

It belongs to the RNA polymerase beta chain family. In terms of assembly, in plastids the minimal PEP RNA polymerase catalytic core is composed of four subunits: alpha, beta, beta', and beta''. When a (nuclear-encoded) sigma factor is associated with the core the holoenzyme is formed, which can initiate transcription.

It localises to the plastid. It is found in the chloroplast. The catalysed reaction is RNA(n) + a ribonucleoside 5'-triphosphate = RNA(n+1) + diphosphate. DNA-dependent RNA polymerase catalyzes the transcription of DNA into RNA using the four ribonucleoside triphosphates as substrates. The sequence is that of DNA-directed RNA polymerase subunit beta from Pyropia yezoensis (Susabi-nori).